The chain runs to 1758 residues: RanBP2-like and GRIP domain-containing protein 4 (1758 aa).

A Phosphoserine modification is found at serine 21. TPR repeat units follow at residues 60-93 (PRAH…NPTQ) and 584-617 (QKMG…LKII). The tract at residues 761–805 (DPLYKNGSLRNADSEIKHSTPSPTKYSLSPSKSYKYSPKTPPRWA) is disordered. A compositionally biased stretch (low complexity) spans 779–798 (STPSPTKYSLSPSKSYKYSP). The RanBD1 1 domain maps to 1037–1173 (HFEPVVQMPE…FEECQQLLLD (137 aa)). 2 disordered regions span residues 1213–1249 (QTKV…TLEW) and 1295–1332 (SFKS…ERDG). Polar residues predominate over residues 1236–1245 (IKPNPENTGP). Over residues 1295-1309 (SFKSALSPSKSPAKL) the composition is skewed to low complexity. Over residues 1318-1330 (TDEESDVTQEEER) the composition is skewed to acidic residues. The 137-residue stretch at 1334–1470 (YFEPVVPLPD…FDEAKTAQEK (137 aa)) folds into the RanBD1 2 domain. Residues 1583-1594 (SETSSVAQSGSE) show a composition bias toward polar residues. Residues 1583–1621 (SETSSVAQSGSESKVEPKKCELSKNSDIEQSSDSKVKNL) form a disordered region. Residues 1595–1618 (SKVEPKKCELSKNSDIEQSSDSKV) are compositionally biased toward basic and acidic residues. Positions 1703–1753 (QEESAANVEHLKNVLLQFIFLKPGSERERLLPVINTMLQLSPEEKGKLAAV) constitute a GRIP domain.

The protein is RanBP2-like and GRIP domain-containing protein 4 (RGPD4) of Homo sapiens (Human).